The sequence spans 187 residues: ECF RNA polymerase sigma factor SigK (187 aa).

Residues 30-96 (YDHTCTRVYG…RAVDRVRAEQ (67 aa)) are sigma-70 factor domain-2. The Interaction with polymerase core subunit RpoC motif lies at 53–56 (ETTQ). The sigma-70 factor domain-4 stretch occupies residues 133–182 (CLDGLTDTQRQCIELAYYGGLTYAEVSQRLATNLSTIKSRMRDALRGLRN). The H-T-H motif DNA-binding region spans 155 to 174 (YAEVSQRLATNLSTIKSRMR).

Belongs to the sigma-70 factor family. ECF subfamily. As to quaternary structure, interacts transiently with the RNA polymerase catalytic core formed by RpoA, RpoB, RpoC and RpoZ (2 alpha, 1 beta, 1 beta' and 1 omega subunit) to form the RNA polymerase holoenzyme that can initiate transcription. Interacts (via sigma-70 factor domain 4) with anti-sigma-K factor RskA.

Its function is as follows. Sigma factors are initiation factors that promote the attachment of RNA polymerase to specific initiation sites and are then released. Extracytoplasmic function (ECF) sigma factors are held in an inactive form by an anti-sigma factor until released by regulated intramembrane proteolysis. The sequence is that of ECF RNA polymerase sigma factor SigK (sigK) from Mycobacterium ulcerans (strain Agy99).